The chain runs to 479 residues: Ribosomal RNA small subunit methyltransferase F (479 aa).

Residues 125-131, E149, D176, and D194 contribute to the S-adenosyl-L-methionine site; that span reads AAAPGSK. Residue C247 is the Nucleophile of the active site.

The protein belongs to the class I-like SAM-binding methyltransferase superfamily. RsmB/NOP family.

The protein localises to the cytoplasm. The enzyme catalyses cytidine(1407) in 16S rRNA + S-adenosyl-L-methionine = 5-methylcytidine(1407) in 16S rRNA + S-adenosyl-L-homocysteine + H(+). In terms of biological role, specifically methylates the cytosine at position 1407 (m5C1407) of 16S rRNA. This Citrobacter koseri (strain ATCC BAA-895 / CDC 4225-83 / SGSC4696) protein is Ribosomal RNA small subunit methyltransferase F.